A 149-amino-acid polypeptide reads, in one-letter code: Large ribosomal subunit protein uL15 (149 aa).

Residues 1 to 29 (MVSHLKKTRKLRGHVSHGHGRVGKHRKGG) show a composition bias toward basic residues. The segment at 1–38 (MVSHLKKTRKLRGHVSHGHGRVGKHRKGGCRGGRGKAG) is disordered.

The protein belongs to the universal ribosomal protein uL15 family.

The sequence is that of Large ribosomal subunit protein uL15 (RPL27A) from Tetrahymena thermophila.